We begin with the raw amino-acid sequence, 231 residues long: DNA mismatch repair protein MutH (231 aa).

Belongs to the MutH family.

The protein localises to the cytoplasm. In terms of biological role, sequence-specific endonuclease that cleaves unmethylated GATC sequences. It is involved in DNA mismatch repair. The polypeptide is DNA mismatch repair protein MutH (Salmonella typhi).